Consider the following 307-residue polypeptide: N-acetylmuramic acid 6-phosphate etherase 2 (307 aa).

Residues 62–225 enclose the SIS domain; sequence ITAAFKQGGR…TTASMIRLGK (164 aa). E90 serves as the catalytic Proton donor. E121 is an active-site residue.

The protein belongs to the GCKR-like family. MurNAc-6-P etherase subfamily. In terms of assembly, homodimer.

It carries out the reaction N-acetyl-D-muramate 6-phosphate + H2O = N-acetyl-D-glucosamine 6-phosphate + (R)-lactate. Its pathway is amino-sugar metabolism; 1,6-anhydro-N-acetylmuramate degradation. It participates in amino-sugar metabolism; N-acetylmuramate degradation. It functions in the pathway cell wall biogenesis; peptidoglycan recycling. Functionally, specifically catalyzes the cleavage of the D-lactyl ether substituent of MurNAc 6-phosphate, producing GlcNAc 6-phosphate and D-lactate. Together with AnmK, is also required for the utilization of anhydro-N-acetylmuramic acid (anhMurNAc) either imported from the medium or derived from its own cell wall murein, and thus plays a role in cell wall recycling. The polypeptide is N-acetylmuramic acid 6-phosphate etherase 2 (Vibrio cholerae serotype O1 (strain ATCC 39315 / El Tor Inaba N16961)).